Here is a 415-residue protein sequence, read N- to C-terminus: Gamma-glutamyl phosphate reductase (415 aa).

This sequence belongs to the gamma-glutamyl phosphate reductase family.

It localises to the cytoplasm. The enzyme catalyses L-glutamate 5-semialdehyde + phosphate + NADP(+) = L-glutamyl 5-phosphate + NADPH + H(+). It functions in the pathway amino-acid biosynthesis; L-proline biosynthesis; L-glutamate 5-semialdehyde from L-glutamate: step 2/2. Catalyzes the NADPH-dependent reduction of L-glutamate 5-phosphate into L-glutamate 5-semialdehyde and phosphate. The product spontaneously undergoes cyclization to form 1-pyrroline-5-carboxylate. The polypeptide is Gamma-glutamyl phosphate reductase (Shouchella clausii (strain KSM-K16) (Alkalihalobacillus clausii)).